The sequence spans 292 residues: G1/S-specific cyclin-D3 (292 aa).

One can recognise a Cyclin N-terminal domain in the interval valine 27 to leucine 152. The disordered stretch occupies residues serine 254–leucine 292. Residues serine 264 and serine 279 each carry the phosphoserine modification. The segment covering glycine 272–threonine 285 has biased composition (low complexity). At threonine 283 the chain carries Phosphothreonine.

This sequence belongs to the cyclin family. Cyclin D subfamily. Interacts with the CDK4 and CDK6 protein kinases to form a serine/threonine kinase holoenzyme complex. The cyclin subunit imparts substrate specificity to the complex. Interacts with ATF5. Interacts with EIF3K. Component of the ternary complex cyclin D/CDK4/CDKN1B required for nuclear translocation and modulation of CDK4-mediated kinase activity. Can form similar complexes with either CDKN1A or CDKN2A. In terms of processing, phosphorylation at Thr-283 by MAP kinases is required for ubiquitination and degradation by the DCX(AMBRA1) complex. Post-translationally, ubiquitinated by the DCX(AMBRA1) complex during the transition from G1 to S cell phase, leading to its degradation: ubiquitination is dependent on Thr-283 phosphorylation. The DCX(AMBRA1) complex represents the major regulator of CCND3 stability during the G1/S transition. Polyubiquitinated by the SCF(FBXL2) complex, leading to proteasomal degradation.

The protein localises to the nucleus. The protein resides in the cytoplasm. Regulatory component of the cyclin D3-CDK4 (DC) complex that phosphorylates and inhibits members of the retinoblastoma (RB) protein family including RB1 and regulates the cell-cycle during G(1)/S transition. Phosphorylation of RB1 allows dissociation of the transcription factor E2F from the RB/E2F complex and the subsequent transcription of E2F target genes which are responsible for the progression through the G(1) phase. Hypophosphorylates RB1 in early G(1) phase. Cyclin D-CDK4 complexes are major integrators of various mitogenenic and antimitogenic signals. Component of the ternary complex, cyclin D3/CDK4/CDKN1B, required for nuclear translocation and activity of the cyclin D-CDK4 complex. Shows transcriptional coactivator activity with ATF5 independently of CDK4. This is G1/S-specific cyclin-D3 from Homo sapiens (Human).